The following is a 113-amino-acid chain: Large ribosomal subunit protein bL17 (113 aa).

It belongs to the bacterial ribosomal protein bL17 family. As to quaternary structure, part of the 50S ribosomal subunit. Contacts protein L32.

The chain is Large ribosomal subunit protein bL17 from Clostridium novyi (strain NT).